The chain runs to 361 residues: UDP-N-acetylglucosamine--N-acetylmuramyl-(pentapeptide) pyrophosphoryl-undecaprenol N-acetylglucosamine transferase (361 aa).

UDP-N-acetyl-alpha-D-glucosamine contacts are provided by residues 11–13 (TGG), N124, R162, S193, and Q292.

This sequence belongs to the glycosyltransferase 28 family. MurG subfamily.

It localises to the cell inner membrane. It carries out the reaction di-trans,octa-cis-undecaprenyl diphospho-N-acetyl-alpha-D-muramoyl-L-alanyl-D-glutamyl-meso-2,6-diaminopimeloyl-D-alanyl-D-alanine + UDP-N-acetyl-alpha-D-glucosamine = di-trans,octa-cis-undecaprenyl diphospho-[N-acetyl-alpha-D-glucosaminyl-(1-&gt;4)]-N-acetyl-alpha-D-muramoyl-L-alanyl-D-glutamyl-meso-2,6-diaminopimeloyl-D-alanyl-D-alanine + UDP + H(+). Its pathway is cell wall biogenesis; peptidoglycan biosynthesis. Its function is as follows. Cell wall formation. Catalyzes the transfer of a GlcNAc subunit on undecaprenyl-pyrophosphoryl-MurNAc-pentapeptide (lipid intermediate I) to form undecaprenyl-pyrophosphoryl-MurNAc-(pentapeptide)GlcNAc (lipid intermediate II). The polypeptide is UDP-N-acetylglucosamine--N-acetylmuramyl-(pentapeptide) pyrophosphoryl-undecaprenol N-acetylglucosamine transferase (Elusimicrobium minutum (strain Pei191)).